The sequence spans 595 residues: MPACCSCSDVFQYETNKVTRIQSMNYGTIKWFFHVIIFSYVCFALVSDKLYQRKEPVISSVHTKVKGIAEVKEEIVENGVKKLVHSVFDTADYTFPLQGNSFFVMTNFLKTEGQEQRLCPEYPTRRTLCSSDRGCKKGWMDPQSKGIQTGRCVVYEGNQKTCEVSAWCPIEAVEEAPRPALLNSAENFTVLIKNNIDFPGHNYTTRNILPGLNITCTFHKTQNPQCPIFRLGDIFRETGDNFSDVAIQGGIMGIEIYWDCNLDRWFHHCRPKYSFRRLDDKTTNVSLYPGYNFRYAKYYKENNVEKRTLIKVFGIRFDILVFGTGGKFDIIQLVVYIGSTLSYFGLAAVFIDFLIDTYSSNCCRSHIYPWCKCCQPCVVNEYYYRKKCESIVEPKPTLKYVSFVDESHIRMVNQQLLGRSLQDVKGQEVPRPAMDFTDLSRLPLALHDTPPIPGQPEEIQLLRKEATPRSRDSPVWCQCGSCLPSQLPESHRCLEELCCRKKPGACITTSELFRKLVLSRHVLQFLLLYQEPLLALDVDSTNSRLRHCAYRCYATWRFGSQDMADFAILPSCCRWRIRKEFPKSEGQYSGFKSPY.

Topologically, residues 1–22 (MPACCSCSDVFQYETNKVTRIQ) are cytoplasmic. A lipid anchor (S-palmitoyl cysteine) is attached at C4. Residues 23 to 46 (SMNYGTIKWFFHVIIFSYVCFALV) traverse the membrane as a helical segment. Residues 47-328 (SDKLYQRKEP…ILVFGTGGKF (282 aa)) are Extracellular-facing. 3 disulfides stabilise this stretch: C119–C168, C129–C152, and C135–C162. Residues R125 and R133 each carry the ADP-ribosylarginine modification. The N-linked (GlcNAc...) asparagine glycan is linked to N187. Position 189 (T189) interacts with ATP. N-linked (GlcNAc...) asparagine glycosylation is found at N202 and N213. A disulfide bridge connects residues C216 and C226. N241 is a glycosylation site (N-linked (GlcNAc...) asparagine). Residues C260 and C269 are joined by a disulfide bond. Residue N284 is glycosylated (N-linked (GlcNAc...) asparagine). Residues R294 and K311 each coordinate ATP. Residues 329 to 353 (DIIQLVVYIGSTLSYFGLAAVFIDF) form a helical membrane-spanning segment. S342 lines the Na(+) pocket. Y343 carries the post-translational modification Phosphotyrosine. The Cytoplasmic portion of the chain corresponds to 354–595 (LIDTYSSNCC…GQYSGFKSPY (242 aa)). A C-cys anchor region spans residues 360-377 (SNCCRSHIYPWCKCCQPC). S-palmitoyl cysteine attachment occurs at residues C362, C363, C374, and C377. S390 is subject to Phosphoserine. The cytoplasmic ballast stretch occupies residues 395–595 (KPTLKYVSFV…GQYSGFKSPY (201 aa)). Positions 479, 499, and 506 each coordinate Zn(2+). R546, H547, Y550, and A567 together coordinate GTP. C572 serves as a coordination point for Zn(2+). The GTP site is built by K583, S589, and G590.

This sequence belongs to the P2X receptor family. As to quaternary structure, homotrimers. Interacts with LAMA3, ITGB2, ACTB, ACTN4, SVIL, MPP3, HSPA1, HSPCB, HSPA8, PIK230 and PTPRB. Interacts (via C-terminus) with EMP2. Interacts with isoform B; this interaction potentiates P2RX7 responses. Post-translationally, phosphorylation results in its inactivation. ADP-ribosylation at Arg-125 is necessary and sufficient to activate P2RX7 and gate the channel. In terms of processing, palmitoylation of several cysteines in the C-terminal cytoplasmic tail is required for efficient localization to cell surface. Palmitoylation prevents channel desensitization by physically anchoring the palmitoylated groups to the membrane. In terms of tissue distribution, widely expressed with highest levels in brain and immune tissues. Predominant form in many tissues.

The protein resides in the cell membrane. It carries out the reaction Ca(2+)(in) = Ca(2+)(out). It catalyses the reaction K(+)(in) = K(+)(out). The catalysed reaction is Na(+)(in) = Na(+)(out). Activated by high extracellular ATP levels (0.1-2.5 mM). The synthetic analog 2'(3')-O-(4-benzoylbenzoyl)ATP (BzATP) acts as a potent agonist. Does not undergo desensitization, instead, undergoes a facilitation process where currents progressively increase with repetitive or prolonged agonist application. Palmitoylation prevents channel desensitization. The permeability of the P2RX7 channel is modulated by the amount of cholesterol in the plasma membrane. ATP-gated nonselective transmembrane cation channel that requires high millimolar concentrations of ATP for activation. Upon ATP binding, it rapidly opens to allow the influx of small cations Na(+) and Ca(2+), and the K(+) efflux. Also has the ability to form a large pore in the cell membrane, allowing the passage of large cationic molecules. In microglia, may mediate NADPH transport across the plasma membrane. In immune cells, P2RX7 acts as a molecular sensor in pathological inflammatory states by detecting and responding to high local concentrations of extracellar ATP. In microglial cells, P2RX7 activation leads to the release of pro-inflammatory cytokines, such as IL-1beta and IL-18, through the activation of the NLRP3 inflammasome and caspase-1. Cooperates with KCNK6 to activate NLRP3 inflammasome. Activates death pathways leading to apoptosis and autophagy. Activates death pathways leading to pyroptosis. Functionally, shows ion channel activity but no macropore function. Its function is as follows. Non-functional channel. This chain is P2X purinoceptor 7 (P2RX7), found in Homo sapiens (Human).